We begin with the raw amino-acid sequence, 375 residues long: Geranylgeranyl transferase type-1 subunit beta (375 aa).

Residues 1 to 33 are disordered; the sequence is MSETAVSIDSDRSKSEEEDEEEYSPPVQSSPSA. Position 2 is an N-acetylserine (Ser-2). PFTB repeat units lie at residues 157–199, 206–247, 265–306, and 313–354; these read SKSL…YMLD, KESA…RLMG, PSLL…KLIG, and KMAL…SLLE. Geranylgeranyl diphosphate contacts are provided by residues 232–234 and 285–288; these read HGG and RTNK. 2 residues coordinate Zn(2+): Asp-291 and Cys-293. 294 to 297 contacts geranylgeranyl diphosphate; sequence YAFW. His-342 lines the Zn(2+) pocket.

This sequence belongs to the protein prenyltransferase subunit beta family. As to quaternary structure, heterodimer of an alpha and a beta subunit. Requires Zn(2+) as cofactor. Mg(2+) serves as cofactor. Expressed in roots, leaves, stems, flowers and siliques.

The catalysed reaction is geranylgeranyl diphosphate + L-cysteinyl-[protein] = S-geranylgeranyl-L-cysteinyl-[protein] + diphosphate. Catalyzes the transfer of a geranyl-geranyl moiety from geranyl-geranyl pyrophosphate to a cysteine at the fourth position from the C-terminus of proteins having the C-terminal sequence Cys-aliphatic-aliphatic-X (CaaX). Seems to exclusively prenylate CaaX substrates with leucine in the terminal position. The beta subunit is responsible for peptide-binding. May negatively regulate abscisic acid (ABA) signaling in guard cells and auxin-induced lateral root initiation. In terms of biological role, negatively regulates ABA signaling in guard cells. in negative regulation of auxin-induced lateral root initiation. This is Geranylgeranyl transferase type-1 subunit beta (GGB) from Arabidopsis thaliana (Mouse-ear cress).